The chain runs to 398 residues: Inner membrane protein YjgN (398 aa).

Residues 1 to 24 (MAQVINEMDVPSHSFVFHGTGERY) lie on the Cytoplasmic side of the membrane. A helical transmembrane segment spans residues 25–45 (FLICVVNVLLTIITLGIYLPW). The Periplasmic portion of the chain corresponds to 46-73 (ALMKCKRYLYANMEVNGQRFSYGITGGN). A helical transmembrane segment spans residues 74–94 (VFFSCLVFVFFYFAILMTVSA). A topological domain (cytoplasmic) is located at residue Asp-95. Residues 96 to 116 (MPLIGCVLTLSLLVLLIFMAA) traverse the membrane as a helical segment. Residues 117-142 (KGLRYQALMTSLNGVRFSFNCSMKGV) lie on the Periplasmic side of the membrane. Residues 143-163 (WWVTFFLPILMAIGMGTVFFI) traverse the membrane as a helical segment. The Cytoplasmic portion of the chain corresponds to 164-175 (STKMLHANSSSS). A helical membrane pass occupies residues 176 to 196 (VIVSVVLMAIVGIVSIGIFNG). At 197-228 (TLYSLVMSFLWSNTSFGIHRFKVKLDTAYCIK) the chain is on the periplasmic side. A helical membrane pass occupies residues 229–249 (YAILAFLALLPFLAVAGYIIF). The Cytoplasmic segment spans residues 250 to 278 (DQILNAYDSSVYANDDIENLQQFMEMQRK). The chain crosses the membrane as a helical span at residues 279 to 299 (MIIAQLIYYFGIAVSTSYLTV). Over 300–333 (SLRNHFMSNLSLNDGRIRFRSTLTYHGMLYRMCA) the chain is Periplasmic. A helical transmembrane segment spans residues 334–354 (LVVISGITGGLAYPLLKIWMI). Residues 355 to 398 (DWQAKNTYLLGDLDDLPLINKEEQPDKGFLASISRGIMPSLPFL) are Cytoplasmic-facing.

The protein resides in the cell inner membrane. The sequence is that of Inner membrane protein YjgN (yjgN) from Escherichia coli O157:H7.